Consider the following 343-residue polypeptide: tRNA N6-adenosine threonylcarbamoyltransferase (343 aa).

Residues His-112 and His-116 each contribute to the Fe cation site. Substrate-binding positions include Leu-135–Gly-139, Asp-168, Gly-181, and Asn-273. Residue Asp-301 participates in Fe cation binding.

It belongs to the KAE1 / TsaD family. Requires Fe(2+) as cofactor.

The protein localises to the cytoplasm. The enzyme catalyses L-threonylcarbamoyladenylate + adenosine(37) in tRNA = N(6)-L-threonylcarbamoyladenosine(37) in tRNA + AMP + H(+). In terms of biological role, required for the formation of a threonylcarbamoyl group on adenosine at position 37 (t(6)A37) in tRNAs that read codons beginning with adenine. Is involved in the transfer of the threonylcarbamoyl moiety of threonylcarbamoyl-AMP (TC-AMP) to the N6 group of A37, together with TsaE and TsaB. TsaD likely plays a direct catalytic role in this reaction. The sequence is that of tRNA N6-adenosine threonylcarbamoyltransferase from Azoarcus sp. (strain BH72).